The sequence spans 191 residues: UPF0312 protein Sputw3181_1309 (191 aa).

The N-terminal stretch at 1-22 (MKKQLLSALIGVSLLVPMAASA) is a signal peptide.

The protein belongs to the UPF0312 family. Type 1 subfamily.

The protein resides in the periplasm. This chain is UPF0312 protein Sputw3181_1309, found in Shewanella sp. (strain W3-18-1).